A 330-amino-acid chain; its full sequence is Beta-1,6-galactofuranosyltransferase WbbI (330 aa).

It is found in the cytoplasm. It functions in the pathway bacterial outer membrane biogenesis; lipopolysaccharide biosynthesis. In terms of biological role, involved in the transfer of galactofuranose (Galf) onto an alpha-D-gluco-configured acceptor substrate to form a beta-1,6-linkage. It uses n-octyl alpha-D-glucopyranoside as an acceptor substrate for the addition of galactofuranose from the donor substrate UDP-galactofuranose. It is not able to use beta-D-glucopyranoside isomers. This Escherichia coli (strain K12) protein is Beta-1,6-galactofuranosyltransferase WbbI (wbbI).